The following is a 301-amino-acid chain: HTH-type transcriptional regulator MtrA (301 aa).

In terms of domain architecture, HTH araC/xylS-type spans 196 to 297 (KRLGHLIQKV…HVSPGQYRKE (102 aa)). 2 DNA-binding regions (H-T-H motif) span residues 216 to 237 (DKMVAAANMSRAQLMRRFKSQV) and 264 to 287 (VLEVALSVGFQSETHFGKAFKRQY).

Its activity is regulated as follows. The affinity for the mtrCDE promoter increases 2-fold in the presence of TX-100, a known effector and substrate of the MtrCDE pump. Functionally, involved in the induction of the mtrCDE-encoded efflux pump. Binds specifically to the mtrCDE promoter region. Required for high-level inducible resistance to the detergent Triton X-100 (TX-100) and the spermicide nonoxynol-9 (N-9). This is HTH-type transcriptional regulator MtrA from Neisseria gonorrhoeae.